We begin with the raw amino-acid sequence, 120 residues long: Large ribosomal subunit protein bL19 (120 aa).

This sequence belongs to the bacterial ribosomal protein bL19 family.

In terms of biological role, this protein is located at the 30S-50S ribosomal subunit interface and may play a role in the structure and function of the aminoacyl-tRNA binding site. This is Large ribosomal subunit protein bL19 from Nostoc punctiforme (strain ATCC 29133 / PCC 73102).